The primary structure comprises 195 residues: Heterogeneous nuclear ribonucleoprotein A/B (195 aa).

The segment at 1–23 is disordered; that stretch reads EEVADGQAHGEXVYREEHHEGEK. Residues 12–23 are compositionally biased toward basic and acidic residues; it reads XVYREEHHEGEK. An RRM domain is found at 32 to 48; the sequence is EETKLFVGALSWETTEK. 2 positions are modified to asymmetric dimethylarginine: R119 and R122. S173 carries the post-translational modification Phosphoserine; by CK2.

Post-translationally, extensively phosphorylated on tyrosine residues.

The protein resides in the cytoplasm. Its subcellular location is the nucleus. Its function is as follows. May regulate mRNA translation and stability. It binds to poly(A) and poly(U) regions of RNA. This binding is inhibited when the protein is phosphorylated. This chain is Heterogeneous nuclear ribonucleoprotein A/B, found in Artemia salina (Brine shrimp).